Reading from the N-terminus, the 287-residue chain is Viomycin phosphotransferase (287 aa).

Asp190 acts as the Proton acceptor in catalysis.

Belongs to the aminoglycoside phosphotransferase family.

It catalyses the reaction viomycin + ATP = O-phosphoviomycin + ADP + H(+). Functionally, the aminoglycoside phosphotransferases achieve inactivation of their antibiotic substrates by phosphorylation. The polypeptide is Viomycin phosphotransferase (vph) (Streptomyces vinaceus).